Consider the following 126-residue polypeptide: Gas vesicle protein J (126 aa).

Belongs to the gas vesicle GvpA family. In terms of assembly, interacts with GvpA.

The protein resides in the gas vesicle. Functionally, a minor component of the gas vesicle, might be involved in nucleating gas vesicle formation. Gas vesicles (GV) are hollow, gas filled proteinaceous nanostructures. During planktonic growth they allow positioning of the organism at a favorable depth for light or nutrient acquisition. This chain is Gas vesicle protein J, found in Pseudanabaena galeata (strain PCC 6901).